The sequence spans 157 residues: Small ribosomal subunit protein uS7 (157 aa).

Belongs to the universal ribosomal protein uS7 family. In terms of assembly, part of the 30S ribosomal subunit. Contacts proteins S9 and S11.

Its function is as follows. One of the primary rRNA binding proteins, it binds directly to 16S rRNA where it nucleates assembly of the head domain of the 30S subunit. Is located at the subunit interface close to the decoding center, probably blocks exit of the E-site tRNA. This is Small ribosomal subunit protein uS7 from Albidiferax ferrireducens (strain ATCC BAA-621 / DSM 15236 / T118) (Rhodoferax ferrireducens).